Consider the following 265-residue polypeptide: Mlc titration factor A (265 aa).

Residues H111, H148, H152, and E211 each contribute to the Zn(2+) site.

Belongs to the MtfA family. In terms of assembly, interacts with Mlc with high affinity. Zn(2+) serves as cofactor.

It is found in the cytoplasm. Proteolytic activity is stimulated by interaction with Mlc. Addition of the chelators EDTA or phenanthroline significantly reduces the peptidase activity, whereas the addition of other protease inhibitors has much less effect. Its function is as follows. Involved in the modulation of the activity of the glucose-phosphotransferase system (glucose-PTS). Interacts with the transcriptional repressor Mlc, preventing its interaction with DNA and leading to the modulation of expression of genes regulated by Mlc, including ptsG, which encodes the PTS system glucose-specific EIICB component. Functionally, shows zinc-dependent metallopeptidase activity. In vitro, can cleave several artificial substrates. The greatest activity and specificity is observed for L-alanine fused to 4-nitroanilide (L-alanine-pNA). Shows significantly lower activity towards L-arginine-pNA, L-proline-pNA, hippuryl-L-phenylalanine and hippuryl-L-arginine, and cannot use FTC-casein. Mlc does not appear to be a biologically relevant peptidase substrate. Biologically relevant targets may have a function in growth transition under changing environmental conditions. This Escherichia coli (strain K12) protein is Mlc titration factor A.